We begin with the raw amino-acid sequence, 1198 residues long: Tetratricopeptide repeat protein 17 (1198 aa).

One copy of the TPR 1 repeat lies at phenylalanine 295 to phenylalanine 328. A coiled-coil region spans residues cysteine 340–histidine 382. TPR repeat units lie at residues tryptophan 619 to glutamine 652 and proline 689 to cysteine 722. Disordered stretches follow at residues leucine 774–serine 793 and valine 902–leucine 954. A compositionally biased stretch (basic residues) spans valine 902–glycine 914. 3 TPR repeats span residues serine 1071–glutamine 1105, aspartate 1108–phenylalanine 1141, and alanine 1142–phenylalanine 1175.

This sequence belongs to the TTC17 family. Interacts with CATIP.

It is found in the cytoplasm. It localises to the cell membrane. The protein localises to the cytoskeleton. Plays a role in primary ciliogenesis by modulating actin polymerization. This chain is Tetratricopeptide repeat protein 17 (Ttc17), found in Mus musculus (Mouse).